Here is a 452-residue protein sequence, read N- to C-terminus: Cysteine--tRNA ligase (452 aa).

Cys35 provides a ligand contact to Zn(2+). Residues 37–47 (PTVYDRAHLGN) carry the 'HIGH' region motif. Cys215, His240, and Glu244 together coordinate Zn(2+). The short motif at 273–277 (KMSKS) is the 'KMSKS' region element. An ATP-binding site is contributed by Lys276.

Belongs to the class-I aminoacyl-tRNA synthetase family. In terms of assembly, monomer. Zn(2+) is required as a cofactor.

The protein localises to the cytoplasm. The catalysed reaction is tRNA(Cys) + L-cysteine + ATP = L-cysteinyl-tRNA(Cys) + AMP + diphosphate. This is Cysteine--tRNA ligase from Gluconobacter oxydans (strain 621H) (Gluconobacter suboxydans).